Reading from the N-terminus, the 321-residue chain is GTP 3',8-cyclase (321 aa).

A Radical SAM core domain is found at Ser5 to Glu233. GTP is bound at residue Arg14. Cys21 and Cys25 together coordinate [4Fe-4S] cluster. Residue Tyr27 participates in S-adenosyl-L-methionine binding. A [4Fe-4S] cluster-binding site is contributed by Cys28. Arg64 contributes to the GTP binding site. Gly68 serves as a coordination point for S-adenosyl-L-methionine. Ser95 is a GTP binding site. Position 119 (Ser119) interacts with S-adenosyl-L-methionine. Residue Lys155 coordinates GTP. Met189 is an S-adenosyl-L-methionine binding site. Cys249 and Cys252 together coordinate [4Fe-4S] cluster. Arg254–Arg256 is a binding site for GTP. Cys266 serves as a coordination point for [4Fe-4S] cluster.

It belongs to the radical SAM superfamily. MoaA family. Monomer and homodimer. Requires [4Fe-4S] cluster as cofactor.

The enzyme catalyses GTP + AH2 + S-adenosyl-L-methionine = (8S)-3',8-cyclo-7,8-dihydroguanosine 5'-triphosphate + 5'-deoxyadenosine + L-methionine + A + H(+). It functions in the pathway cofactor biosynthesis; molybdopterin biosynthesis. Catalyzes the cyclization of GTP to (8S)-3',8-cyclo-7,8-dihydroguanosine 5'-triphosphate. The protein is GTP 3',8-cyclase of Helicobacter pylori (strain HPAG1).